The following is a 411-amino-acid chain: Acetylornithine aminotransferase (411 aa).

Residues 107–108 (GT) and Phe141 contribute to the pyridoxal 5'-phosphate site. Residue Arg144 coordinates N(2)-acetyl-L-ornithine. 227–230 (DEIQ) lines the pyridoxal 5'-phosphate pocket. Lys256 is modified (N6-(pyridoxal phosphate)lysine). Thr284 lines the N(2)-acetyl-L-ornithine pocket. Thr285 lines the pyridoxal 5'-phosphate pocket.

Belongs to the class-III pyridoxal-phosphate-dependent aminotransferase family. ArgD subfamily. As to quaternary structure, homodimer. Pyridoxal 5'-phosphate serves as cofactor.

It is found in the cytoplasm. It catalyses the reaction N(2)-acetyl-L-ornithine + 2-oxoglutarate = N-acetyl-L-glutamate 5-semialdehyde + L-glutamate. The protein operates within amino-acid biosynthesis; L-arginine biosynthesis; N(2)-acetyl-L-ornithine from L-glutamate: step 4/4. The polypeptide is Acetylornithine aminotransferase (Xylella fastidiosa (strain Temecula1 / ATCC 700964)).